We begin with the raw amino-acid sequence, 202 residues long: Dephospho-CoA kinase (202 aa).

The 198-residue stretch at 3-200 folds into the DPCK domain; sequence TIGLTGGIGS…QRYLTLAANR (198 aa). An ATP-binding site is contributed by 11 to 16; the sequence is GSGKSA.

It belongs to the CoaE family.

It localises to the cytoplasm. The enzyme catalyses 3'-dephospho-CoA + ATP = ADP + CoA + H(+). The protein operates within cofactor biosynthesis; coenzyme A biosynthesis; CoA from (R)-pantothenate: step 5/5. Functionally, catalyzes the phosphorylation of the 3'-hydroxyl group of dephosphocoenzyme A to form coenzyme A. The protein is Dephospho-CoA kinase of Thiobacillus denitrificans (strain ATCC 25259 / T1).